A 310-amino-acid chain; its full sequence is Ribosomal RNA small subunit methyltransferase H (310 aa).

S-adenosyl-L-methionine contacts are provided by residues 32 to 34 (GGH), Asp-52, Phe-79, Asp-100, and Gln-107.

It belongs to the methyltransferase superfamily. RsmH family.

It localises to the cytoplasm. The enzyme catalyses cytidine(1402) in 16S rRNA + S-adenosyl-L-methionine = N(4)-methylcytidine(1402) in 16S rRNA + S-adenosyl-L-homocysteine + H(+). In terms of biological role, specifically methylates the N4 position of cytidine in position 1402 (C1402) of 16S rRNA. The chain is Ribosomal RNA small subunit methyltransferase H from Bacillus mycoides (strain KBAB4) (Bacillus weihenstephanensis).